We begin with the raw amino-acid sequence, 284 residues long: 2-dehydro-3-deoxyphosphooctonate aldolase (284 aa).

Belongs to the KdsA family.

The protein resides in the cytoplasm. It carries out the reaction D-arabinose 5-phosphate + phosphoenolpyruvate + H2O = 3-deoxy-alpha-D-manno-2-octulosonate-8-phosphate + phosphate. Its pathway is carbohydrate biosynthesis; 3-deoxy-D-manno-octulosonate biosynthesis; 3-deoxy-D-manno-octulosonate from D-ribulose 5-phosphate: step 2/3. The protein operates within bacterial outer membrane biogenesis; lipopolysaccharide biosynthesis. The sequence is that of 2-dehydro-3-deoxyphosphooctonate aldolase from Haemophilus influenzae (strain 86-028NP).